The following is a 248-amino-acid chain: 4-hydroxy-tetrahydrodipicolinate reductase (248 aa).

Residues Asp32, 74–76 (GTT), and 99–102 (SANF) each bind NAD(+). Catalysis depends on His134, which acts as the Proton donor/acceptor. Residue His135 coordinates (S)-2,3,4,5-tetrahydrodipicolinate. Lys138 acts as the Proton donor in catalysis. (S)-2,3,4,5-tetrahydrodipicolinate is bound at residue 144–145 (GT).

The protein belongs to the DapB family.

It localises to the cytoplasm. The catalysed reaction is (S)-2,3,4,5-tetrahydrodipicolinate + NAD(+) + H2O = (2S,4S)-4-hydroxy-2,3,4,5-tetrahydrodipicolinate + NADH + H(+). It carries out the reaction (S)-2,3,4,5-tetrahydrodipicolinate + NADP(+) + H2O = (2S,4S)-4-hydroxy-2,3,4,5-tetrahydrodipicolinate + NADPH + H(+). It functions in the pathway amino-acid biosynthesis; L-lysine biosynthesis via DAP pathway; (S)-tetrahydrodipicolinate from L-aspartate: step 4/4. Its function is as follows. Catalyzes the conversion of 4-hydroxy-tetrahydrodipicolinate (HTPA) to tetrahydrodipicolinate. This is 4-hydroxy-tetrahydrodipicolinate reductase from Chlorobium limicola (strain DSM 245 / NBRC 103803 / 6330).